A 1025-amino-acid polypeptide reads, in one-letter code: Dihydropyrimidine dehydrogenase [NADP(+)] (1025 aa).

The region spanning 69-100 is the 4Fe-4S ferredoxin-type 1 domain; the sequence is ERGALREAMRCLKCADAPCQKSCPTNLDIKSF. [4Fe-4S] cluster is bound by residues cysteine 79, cysteine 82, cysteine 87, and cysteine 91. Valine 129 contributes to the FAD binding site. The [4Fe-4S] cluster site is built by cysteine 130, cysteine 136, cysteine 140, and glutamine 156. FAD contacts are provided by residues 194–198, 218–226, arginine 235, and leucine 261; these read GAGPA and EKQEYVGGI. NADP(+) is bound by residues 340–343, 364–365, and arginine 371; these read AGDT and RK. Lysine 384 carries the N6-acetyllysine modification. NADP(+) contacts are provided by residues 437 to 439 and 481 to 487; these read AFG and DVVGIAN. 480–489 is a binding site for FAD; that stretch reads GDVVGIANTT. FMN contacts are provided by residues serine 550 and 574 to 575; that span reads KT. Substrate is bound by residues asparagine 609 and 668–670; that span reads NLS. Cysteine 671 functions as the Proton acceptor in the catalytic mechanism. Residue lysine 709 coordinates FMN. 736–737 contributes to the substrate binding site; the sequence is NT. Residues glycine 767, 793-795, and 816-817 contribute to the FMN site; these read TGG and CS. 4Fe-4S ferredoxin-type domains are found at residues 944 to 976 and 978 to 1007; these read VVAVIDEEMCINCGKCYMTCNDSGYQAIQFDPE and HLPTVTDTCTGCTLCLSVCPIIDCIKMVSR. The [4Fe-4S] cluster site is built by cysteine 953, cysteine 956, cysteine 959, cysteine 963, cysteine 986, cysteine 989, cysteine 992, and cysteine 996.

This sequence belongs to the dihydropyrimidine dehydrogenase family. As to quaternary structure, homodimer. FAD serves as cofactor. The cofactor is FMN. Requires [4Fe-4S] cluster as cofactor.

Its subcellular location is the cytoplasm. The catalysed reaction is 5,6-dihydrouracil + NADP(+) = uracil + NADPH + H(+). It carries out the reaction 5,6-dihydrothymine + NADP(+) = thymine + NADPH + H(+). It functions in the pathway amino-acid biosynthesis; beta-alanine biosynthesis. Inactivated by 5-iodouracil. In terms of biological role, involved in pyrimidine base degradation. Catalyzes the reduction of uracil and thymine. Also involved the degradation of the chemotherapeutic drug 5-fluorouracil. The polypeptide is Dihydropyrimidine dehydrogenase [NADP(+)] (DPYD) (Bos taurus (Bovine)).